We begin with the raw amino-acid sequence, 199 residues long: UPF0637 protein LVIS_1261 (199 aa).

The protein belongs to the UPF0637 family.

The chain is UPF0637 protein LVIS_1261 from Levilactobacillus brevis (strain ATCC 367 / BCRC 12310 / CIP 105137 / JCM 1170 / LMG 11437 / NCIMB 947 / NCTC 947) (Lactobacillus brevis).